Reading from the N-terminus, the 637-residue chain is Galactofuranosyltransferase GlfT2 (637 aa).

Residues arginine 171, glutamine 200, asparagine 229, and aspartate 256 each coordinate UDP-alpha-D-galactofuranose. 2 residues coordinate Mn(2+): aspartate 256 and aspartate 258. Aspartate 372 acts as the Proton acceptor in catalysis. Histidine 396 contacts Mn(2+).

The protein belongs to the glycosyltransferase 2 family. Homotetramer. Mn(2+) is required as a cofactor. Mg(2+) serves as cofactor.

The protein resides in the cell membrane. It catalyses the reaction beta-D-galactofuranosyl-(1-&gt;5)-beta-D-galactofuranosyl-(1-&gt;4)-alpha-L-rhamnosyl-(1-&gt;3)-N-acetyl-alpha-D-glucosaminyl-diphospho-trans,octa-cis-decaprenol + 28 UDP-alpha-D-galactofuranose = [beta-D-galactofuranosyl-(1-&gt;5)-beta-D-galactofuranosyl-(1-&gt;6)]14-beta-D-galactofuranosyl-(1-&gt;5)-beta-D-galactofuranosyl-(1-&gt;4)-alpha-L-rhamnopyranosyl-(1-&gt;3)-N-acetyl-alpha-D-glucosaminyl-diphospho-trans,octa-cis-decaprenol + 28 UDP + 28 H(+). The protein operates within cell wall biogenesis; cell wall polysaccharide biosynthesis. Functionally, involved in the galactan polymerization of the arabinogalactan (AG) region of the mycolylarabinogalactan-peptidoglycan (mAGP) complex, an essential component of the mycobacteria cell wall. Thus, successively transfers approximately 28 galactofuranosyl (Galf) residues from UDP-galactofuranose (UDP-Galf) onto the galactofuranosyl-galactofuranosyl-rhamnosyl-GlcNAc-diphospho-decaprenol (Galf-Galf-Rha-GlcNAc-PP-C50) acceptor produced by GlfT1, with alternating 1-&gt;5 and 1-&gt;6 links, forming a galactan domain with approximately 30 galactofuranosyl residues. The polypeptide is Galactofuranosyltransferase GlfT2 (Mycobacterium tuberculosis (strain ATCC 25618 / H37Rv)).